Reading from the N-terminus, the 115-residue chain is Glycine cleavage system H-like protein (115 aa).

A Lipoyl-binding domain is found at 17–99; it reads VVRLGLTEKM…EGEGWLAVVR (83 aa). K58 bears the N6-lipoyllysine mark.

Belongs to the GcvH family. Requires (R)-lipoate as cofactor.

The polypeptide is Glycine cleavage system H-like protein (Chlamydia pneumoniae (Chlamydophila pneumoniae)).